The following is a 133-amino-acid chain: Vascular endothelial growth factor homolog (133 aa).

The first 20 residues, 1 to 20, serve as a signal peptide directing secretion; it reads MKLLVGILVAVCLHQYLLNA. Disulfide bonds link C36–C78, C67–C112, and C71–C114. Residue N85 is glycosylated (N-linked (GlcNAc...) asparagine; by host).

The protein belongs to the PDGF/VEGF growth factor family. As to quaternary structure, homodimer; disulfide-linked.

The protein resides in the secreted. Functionally, induces endothelial proliferation. The chain is Vascular endothelial growth factor homolog from Orf virus (strain NZ2) (OV NZ-2).